We begin with the raw amino-acid sequence, 164 residues long: Proline-rich protein 2 (164 aa).

The first 21 residues, 1–21 (MNLKVGIAVLIIALIVPSAQP), serve as a signal peptide directing secretion.

Component of the acid-soluble organic matrix of calcified layers of the shell (at protein level).

The protein resides in the secreted. The chain is Proline-rich protein 2 from Lottia gigantea (Giant owl limpet).